The chain runs to 444 residues: Ribulose bisphosphate carboxylase (444 aa).

Lys-163 serves as the catalytic Proton acceptor. Lys-165 serves as a coordination point for substrate. Residues Lys-189, Asp-191, and Glu-192 each coordinate Mg(2+). Lys-189 bears the N6-carboxylysine mark. The active-site Proton acceptor is the His-281. Residues Arg-282, His-314, Ser-367–Gly-369, and Gln-389–Gly-392 contribute to the substrate site.

Belongs to the RuBisCO large chain family. Type III subfamily. As to quaternary structure, homodimer or homodecamer. In contrast to form I RuBisCO, the form III RuBisCO is composed solely of large subunits. The cofactor is Mg(2+).

It carries out the reaction 2 (2R)-3-phosphoglycerate + 2 H(+) = D-ribulose 1,5-bisphosphate + CO2 + H2O. The enzyme catalyses D-ribulose 1,5-bisphosphate + O2 = 2-phosphoglycolate + (2R)-3-phosphoglycerate + 2 H(+). Catalyzes the addition of molecular CO(2) and H(2)O to ribulose 1,5-bisphosphate (RuBP), generating two molecules of 3-phosphoglycerate (3-PGA). Functions in an archaeal AMP degradation pathway, together with AMP phosphorylase and R15P isomerase. This Thermococcus onnurineus (strain NA1) protein is Ribulose bisphosphate carboxylase.